A 526-amino-acid polypeptide reads, in one-letter code: Peptide chain release factor 3 (526 aa).

The tr-type G domain maps to 11–277 (SKRRTFAIIS…SLIKWAPSPL (267 aa)). Residues 20-27 (SHPDAGKT), 88-92 (DTPGH), and 142-145 (NKLD) contribute to the GTP site.

The protein belongs to the TRAFAC class translation factor GTPase superfamily. Classic translation factor GTPase family. PrfC subfamily.

The protein localises to the cytoplasm. In terms of biological role, increases the formation of ribosomal termination complexes and stimulates activities of RF-1 and RF-2. It binds guanine nucleotides and has strong preference for UGA stop codons. It may interact directly with the ribosome. The stimulation of RF-1 and RF-2 is significantly reduced by GTP and GDP, but not by GMP. The sequence is that of Peptide chain release factor 3 from Buchnera aphidicola subsp. Acyrthosiphon pisum (strain 5A).